Reading from the N-terminus, the 331-residue chain is Thiamine-monophosphate kinase (331 aa).

4 residues coordinate Mg(2+): aspartate 43, threonine 59, threonine 60, and aspartate 61. A substrate-binding site is contributed by histidine 68. Residues aspartate 90, aspartate 138, and aspartate 231 each contribute to the Mg(2+) site. 137–138 (GD) provides a ligand contact to ATP. Residue serine 233 coordinates ATP. Aspartate 234 contacts Mg(2+). 2 residues coordinate substrate: glutamate 284 and tryptophan 328.

It belongs to the thiamine-monophosphate kinase family.

The catalysed reaction is thiamine phosphate + ATP = thiamine diphosphate + ADP. It functions in the pathway cofactor biosynthesis; thiamine diphosphate biosynthesis; thiamine diphosphate from thiamine phosphate: step 1/1. Functionally, catalyzes the ATP-dependent phosphorylation of thiamine-monophosphate (TMP) to form thiamine-pyrophosphate (TPP), the active form of vitamin B1. In Corynebacterium glutamicum (strain ATCC 13032 / DSM 20300 / JCM 1318 / BCRC 11384 / CCUG 27702 / LMG 3730 / NBRC 12168 / NCIMB 10025 / NRRL B-2784 / 534), this protein is Thiamine-monophosphate kinase.